Consider the following 358-residue polypeptide: Glutamate--cysteine ligase (358 aa).

It belongs to the glutamate--cysteine ligase type 2 family. YbdK subfamily.

It carries out the reaction L-cysteine + L-glutamate + ATP = gamma-L-glutamyl-L-cysteine + ADP + phosphate + H(+). Functionally, catalyzes the synthesis of gamma-glutamylcysteine (gamma-GC), the main low-molecular-weight thiol compound instead of glutathione in halophilic archaea. The sequence is that of Glutamate--cysteine ligase from Haloferax volcanii (strain ATCC 29605 / DSM 3757 / JCM 8879 / NBRC 14742 / NCIMB 2012 / VKM B-1768 / DS2) (Halobacterium volcanii).